Here is a 163-residue protein sequence, read N- to C-terminus: Staphylokinase (163 aa).

The first 27 residues, 1–27 (MLKRSLLFLTVLLLLFSFSSITNEVSA), serve as a signal peptide directing secretion.

This sequence belongs to the staphylokinase family.

The protein resides in the secreted. Potent plasminogen activator that converts plasminogen into plasmin. It forms a 1:1 complex with plasmin, which in turn activates other plasminogen molecules. In Staphylococcus phage S phi-C (Bacteriophage S phi-C), this protein is Staphylokinase.